The sequence spans 235 residues: BPI fold-containing family A member 2 (235 aa).

The first 20 residues, 1–20 (MFQLGSLVVLCGLLIGNSES), serve as a signal peptide directing secretion. Cys-161 and Cys-204 are disulfide-bonded.

Belongs to the BPI/LBP/Plunc superfamily. Plunc family. In terms of tissue distribution, predominates in the parotid glands, present in smaller amounts (1/10) in the submaxillary glands and in the sublingual glands, and at lower amount in the pancreas but undetectable in the liver. Found also in lacrimal gland.

The protein localises to the secreted. In terms of biological role, has strong antibacterial activity against P.aeruginosa. This Mus musculus (Mouse) protein is BPI fold-containing family A member 2 (Bpifa2).